We begin with the raw amino-acid sequence, 274 residues long: Large ribosomal subunit protein uL2c (274 aa).

The segment at 224 to 274 (NPVDHPHGGGEGRAPIGRKKPTTPWGYPALGRKSRKRNKYSEKFILRHRSK) is disordered.

This sequence belongs to the universal ribosomal protein uL2 family. As to quaternary structure, part of the 50S ribosomal subunit.

The protein resides in the plastid. The protein localises to the chloroplast. The sequence is that of Large ribosomal subunit protein uL2c (rpl2) from Ipomoea purpurea (Common morning glory).